Consider the following 427-residue polypeptide: tRNA pseudouridine synthase Pus10 (427 aa).

Asp240 acts as the Nucleophile in catalysis. Substrate contacts are provided by Tyr306 and Tyr378.

This sequence belongs to the pseudouridine synthase Pus10 family.

The enzyme catalyses uridine(54) in tRNA = pseudouridine(54) in tRNA. The catalysed reaction is uridine(55) in tRNA = pseudouridine(55) in tRNA. Its function is as follows. Responsible for synthesis of pseudouridine from uracil-54 and uracil-55 in the psi GC loop of transfer RNAs. The polypeptide is tRNA pseudouridine synthase Pus10 (Halorubrum lacusprofundi (strain ATCC 49239 / DSM 5036 / JCM 8891 / ACAM 34)).